The following is a 117-amino-acid chain: Large ribosomal subunit protein uL24 (117 aa).

The segment covering 1-10 (MSKQPRKQRK) has biased composition (basic residues). The disordered stretch occupies residues 1–28 (MSKQPRKQRKALYTAPLHKRHNSMSVHL).

It belongs to the universal ribosomal protein uL24 family. As to quaternary structure, part of the 50S ribosomal subunit.

Its function is as follows. One of two assembly initiator proteins, it binds directly to the 5'-end of the 23S rRNA, where it nucleates assembly of the 50S subunit. Functionally, located at the polypeptide exit tunnel on the outside of the subunit. The polypeptide is Large ribosomal subunit protein uL24 (Methanosphaera stadtmanae (strain ATCC 43021 / DSM 3091 / JCM 11832 / MCB-3)).